The primary structure comprises 529 residues: Glycylpeptide N-tetradecanoyltransferase 2 (529 aa).

Residues 1 to 82 form a disordered region; that stretch reads MAEDSESAAS…QEIKIQQSSK (82 aa). Positions 15 to 32 are enriched in acidic residues; the sequence is ELDDQDTCGIDGDNEEET. The residue at position 38 (Ser38) is a Phosphoserine. Residues 46 to 57 show a composition bias toward basic residues; that stretch reads KKKKKKQKRKKE. The span at 61–82 shows a compositional bias: polar residues; it reads SGGTKSDSASDSQEIKIQQSSK. The tetradecanoyl-CoA site is built by Trp153, Leu281, Val283, Ser289, Arg291, Val292, and Ala293.

It belongs to the NMT family.

The protein resides in the cytoplasm. Its subcellular location is the membrane. The catalysed reaction is N-terminal glycyl-[protein] + tetradecanoyl-CoA = N-tetradecanoylglycyl-[protein] + CoA + H(+). The enzyme catalyses N-terminal glycyl-L-lysyl-[protein] + tetradecanoyl-CoA = N-terminal glycyl-(N(6)-tetradecanoyl)-L-lysyl-[protein] + CoA + H(+). Adds a myristoyl group to the N-terminal glycine residue of certain cellular and viral proteins. Also able to mediate N-terminal lysine myristoylation of proteins: catalyzes myristoylation of ARF6 on both 'Gly-2' and 'Lys-3'. Lysine myristoylation is required to maintain ARF6 on membranes during the GTPase cycle. The chain is Glycylpeptide N-tetradecanoyltransferase 2 (Nmt2) from Mus musculus (Mouse).